The primary structure comprises 176 residues: uncharacterized protein (176 aa).

An N-terminal signal peptide occupies residues methionine 1–serine 22. An intrachain disulfide couples cysteine 38 to cysteine 78.

The protein belongs to the fimbrial protein family.

The protein resides in the fimbrium. This is an uncharacterized protein from Escherichia coli (strain K12).